The chain runs to 252 residues: F-box protein At5g39250 (252 aa).

The F-box domain occupies 1 to 42; that stretch reads MFSEEVLKNVFPLLEGEDLASCMGVCKQWRDIARDDFYWKCQ.

This chain is F-box protein At5g39250, found in Arabidopsis thaliana (Mouse-ear cress).